A 690-amino-acid polypeptide reads, in one-letter code: Elongation factor G (690 aa).

One can recognise a tr-type G domain in the interval lysine 8 to leucine 282. GTP-binding positions include alanine 17–threonine 24, aspartate 81–histidine 85, and asparagine 135–aspartate 138.

It belongs to the TRAFAC class translation factor GTPase superfamily. Classic translation factor GTPase family. EF-G/EF-2 subfamily.

It localises to the cytoplasm. Catalyzes the GTP-dependent ribosomal translocation step during translation elongation. During this step, the ribosome changes from the pre-translocational (PRE) to the post-translocational (POST) state as the newly formed A-site-bound peptidyl-tRNA and P-site-bound deacylated tRNA move to the P and E sites, respectively. Catalyzes the coordinated movement of the two tRNA molecules, the mRNA and conformational changes in the ribosome. The chain is Elongation factor G from Acholeplasma laidlawii (strain PG-8A).